The primary structure comprises 578 residues: Sulfite reductase [NADPH] hemoprotein beta-component (578 aa).

Residues cysteine 441, cysteine 447, cysteine 487, and cysteine 491 each coordinate [4Fe-4S] cluster. A siroheme-binding site is contributed by cysteine 491.

It belongs to the nitrite and sulfite reductase 4Fe-4S domain family. Alpha(8)-beta(8). The alpha component is a flavoprotein, the beta component is a hemoprotein. Siroheme serves as cofactor. Requires [4Fe-4S] cluster as cofactor.

It carries out the reaction hydrogen sulfide + 3 NADP(+) + 3 H2O = sulfite + 3 NADPH + 4 H(+). It functions in the pathway sulfur metabolism; hydrogen sulfide biosynthesis; hydrogen sulfide from sulfite (NADPH route): step 1/1. Component of the sulfite reductase complex that catalyzes the 6-electron reduction of sulfite to sulfide. This is one of several activities required for the biosynthesis of L-cysteine from sulfate. This is Sulfite reductase [NADPH] hemoprotein beta-component from Vibrio vulnificus (strain YJ016).